A 272-amino-acid polypeptide reads, in one-letter code: NH(3)-dependent NAD(+) synthetase (272 aa).

Residue G45–S52 coordinates ATP. Residue D51 participates in Mg(2+) binding. R138 serves as a coordination point for deamido-NAD(+). ATP is bound at residue T158. E163 serves as a coordination point for Mg(2+). Deamido-NAD(+) is bound by residues K171 and D178. 2 residues coordinate ATP: K187 and T209. H258–K259 is a deamido-NAD(+) binding site.

Belongs to the NAD synthetase family. As to quaternary structure, homodimer.

The enzyme catalyses deamido-NAD(+) + NH4(+) + ATP = AMP + diphosphate + NAD(+) + H(+). The protein operates within cofactor biosynthesis; NAD(+) biosynthesis; NAD(+) from deamido-NAD(+) (ammonia route): step 1/1. Its function is as follows. Catalyzes the ATP-dependent amidation of deamido-NAD to form NAD. Uses ammonia as a nitrogen source. This Bacillus cereus (strain 03BB102) protein is NH(3)-dependent NAD(+) synthetase.